Here is a 370-residue protein sequence, read N- to C-terminus: Phosphate-binding protein PstS 2 (370 aa).

Residues 1–22 form the signal peptide; the sequence is MKFARSGAAVSLLAAGTLVLTA. Residue C23 is the site of N-palmitoyl cysteine attachment. Residue C23 is the site of S-diacylglycerol cysteine attachment. Phosphate contacts are provided by residues 54 to 56, S84, D102, and 191 to 193; these read STA and SGT.

The protein belongs to the PstS family. As to quaternary structure, the complex is composed of two ATP-binding proteins (PstB), two transmembrane proteins (PstC and PstA) and a solute-binding protein (PstS).

It is found in the cell membrane. In terms of biological role, functions in inorganic phosphate uptake, although probably not the main uptake protein under phosphate starvation. Part of the ABC transporter complex PstSACB involved in phosphate import. The chain is Phosphate-binding protein PstS 2 (pstS2) from Mycobacterium tuberculosis (strain ATCC 25618 / H37Rv).